Here is a 141-residue protein sequence, read N- to C-terminus: ATP synthase epsilon chain (141 aa).

Belongs to the ATPase epsilon chain family. F-type ATPases have 2 components, CF(1) - the catalytic core - and CF(0) - the membrane proton channel. CF(1) has five subunits: alpha(3), beta(3), gamma(1), delta(1), epsilon(1). CF(0) has three main subunits: a, b and c.

The protein localises to the cell inner membrane. Its function is as follows. Produces ATP from ADP in the presence of a proton gradient across the membrane. The polypeptide is ATP synthase epsilon chain (Aromatoleum aromaticum (strain DSM 19018 / LMG 30748 / EbN1) (Azoarcus sp. (strain EbN1))).